A 575-amino-acid chain; its full sequence is Jasmonoyl--L-amino acid synthetase JAR1 (575 aa).

The stretch at methionine 10–glutamine 30 forms a coiled coil. Position 98 (serine 98) interacts with ATP. Serine 101 contributes to the jasmonate binding site. ATP is bound by residues methionine 118, threonine 121, glycine 163, asparagine 168, and glycine 331–tryptophan 336. An an L-alpha-amino acid-binding site is contributed by threonine 166–tyrosine 170. Residue histidine 328–glycine 331 coordinates jasmonate. Lysine 530 to histidine 534 is an an L-alpha-amino acid binding site. Lysine 557 contacts ATP.

This sequence belongs to the IAA-amido conjugating enzyme family. In terms of assembly, interacts with GSTU20/FIP1 under continuous far red (cFR) light; this binding increases its activity and determines the priority of substrate binding.

It is found in the cytoplasm. The enzyme catalyses a jasmonate + an L-alpha-amino acid + ATP = a jasmonyl-L-amino acid + AMP + diphosphate + H(+). It catalyses the reaction (+)-7-isojasmonate + L-isoleucine + ATP = L-isoleucine-(+)-7-isojasmonate + AMP + diphosphate + H(+). Its activity is regulated as follows. Activated by GSTU20/FIP1. Its function is as follows. Catalyzes the synthesis of jasmonates-amino acid conjugates by adenylation; can use Ile and, in vitro at least, Val, Leu and Phe as conjugating amino acids on jasmonic acid (JA) and 9,10-dihydro-JA substrates, and to a lower extent, on 3-oxo-2-(2Z-pentenyl)-cyclopentane-1-butyric acid (OPC-4) and 12-hydroxy-JA (12-OH-JA). Can synthesize adenosine 5-tetraphosphate in vitro. Required for the JA-mediated signaling pathway that regulates many developmental and defense mechanisms, including growth root inhibition, vegetative storage proteins (VSPs) accumulation, induced systemic resistance (ISR), response to wounding and herbivores, tolerance to ozone O(3) (probably having a role in lesion containment). Plays an important role in the accumulation of JA-Ile in response to wounding, both locally and systemically; promotes JA responding genes especially in distal part of wounded plants, via the JA-Ile-stimulated degradation of JAZ repressor proteins by the SCF(COI)E3 ubiquitin-protein ligase pathway. Involved in the apoptosis-like programmed cell death (PCD) induced by fungal toxin fumonisin B1-mediated (FB1). Required for volatile compounds (C6-aldehydes and allo-ocimene)-mediated defense activation. Involved in the non-pathogenic rhizobacterium-mediated ISR (defense priming) by P.fluorescens (strains CHAOr and WCS417r) and P.putida LSW17S against infection leaf pathogens such as P.syringae pv. tomato and H.parasitica. Required for the JA-dependent resistance to fungi such as P.irregulare, U.vignae and U.appendiculatus. Necessary to induce systemic resistance against R.solanaceraum and P.syringae pv. tomato with P.oligandrum (a non-pathogenic biocontrol agent) cell wall protein fraction (CWP). Mediates PGIP2 accumulation in response to B.cinerea infection and thus contributes to resistance against this pathogen. Modulates the UV-B alteration of leaves attractiveness to diamondback moths P.xylostella leading to insect oviposition. Involved in the regulation of far-red light influence on development, being an actor of the interplay between light and JA signaling. Seems necessary for the salicylic acid (SA)-mediated, NPR1-independent resistance pathway. May contribute to the chitin-elicited pathway. Contributes to the sensitivity toward F.graminearum. The sequence is that of Jasmonoyl--L-amino acid synthetase JAR1 from Arabidopsis thaliana (Mouse-ear cress).